The sequence spans 477 residues: MKHIVKNIHFVGIGGAGMSGIAEVLLNLGYKVSGSDVGNNAATRRLASLGATVMHGHDAANVTGANAVVVSTAVSGDNPEVLAARSKRIPVVPRAVMLAELMRLKQGVAIAGTHGKTTTTSLVASVLAEGGLDPTFVIGGRLNSAGANARLGTGDFIVAEADESDASFLNLFPVIEVITNIDADHMDTYGHDFARLKQAFIEFTQRLPFYGIAVLCVDDPNVREILPFVSKPVVRYGFAEDAQIRAVDARAVDGQMHFTVQRQLNGHTEPPLEIVLNLPGLHNVQNALAAIAIATELEVPDAAIVKALREFHGVGRRFQRYGEVATPDGAGTFTLVDDYGHHPVEMAATLAAARGAFPGRRLVLAFQPHRFTRTRDCFEDFVKVLGTVDALLLSEVYAAGEAPIVAADGRALTRALRVAGKVEPVFVEQMEEMPQAILDAVRPGDVVVTMGAGSIGAVPGQLVSHQQSTQSTQGGQA.

ATP is bound at residue 112–118 (GTHGKTT).

This sequence belongs to the MurCDEF family.

The protein localises to the cytoplasm. It catalyses the reaction UDP-N-acetyl-alpha-D-muramate + L-alanine + ATP = UDP-N-acetyl-alpha-D-muramoyl-L-alanine + ADP + phosphate + H(+). Its pathway is cell wall biogenesis; peptidoglycan biosynthesis. Functionally, cell wall formation. The polypeptide is UDP-N-acetylmuramate--L-alanine ligase (Cupriavidus necator (strain ATCC 17699 / DSM 428 / KCTC 22496 / NCIMB 10442 / H16 / Stanier 337) (Ralstonia eutropha)).